We begin with the raw amino-acid sequence, 444 residues long: uncharacterized protein (444 aa).

Residues 1–11 (MASSAGRDKLR) show a composition bias toward basic and acidic residues. Residues 1 to 35 (MASSAGRDKLRSRGQRVFAFGSSTPRDLSHMSKVP) form a disordered region.

This is an uncharacterized protein from Caenorhabditis elegans.